Consider the following 163-residue polypeptide: MLKYIPAIFAIILSSNIAIASKNYDYINATPLRQVADLIDSHITNIDHLFNNRLMFYESSSIKSKFITKDKQYVIIMEVPGFDKNQIKVKLNGKKLFIAGNIEEKNKANDSDNYMNKNFNYVISLYEDVDQTNISARLKNGILTIILPRIEVKEQDAKEITIN.

The region spanning 55 to 163 (MFYESSSIKS…EQDAKEITIN (109 aa)) is the sHSP domain.

It belongs to the small heat shock protein (HSP20) family.

The protein is Small heat shock protein C1 (hspC1) of Rickettsia typhi (strain ATCC VR-144 / Wilmington).